The sequence spans 152 residues: Small ribosomal subunit protein bS6 (152 aa).

Residues 94–152 (VKQEGPLPTPKPSNKSSTQSENKDNPETKVESKEEQSVTNSDTSTTKKDDNEIKENTES) are disordered. Composition is skewed to basic and acidic residues over residues 114-129 (ENKDNPETKVESKEEQ) and 138-152 (TTKKDDNEIKENTES).

Belongs to the bacterial ribosomal protein bS6 family.

Functionally, binds together with bS18 to 16S ribosomal RNA. This is Small ribosomal subunit protein bS6 from Prochlorococcus marinus (strain MIT 9312).